The chain runs to 224 residues: Uracil-DNA glycosylase 2 (224 aa).

D64 acts as the Proton acceptor in catalysis.

It belongs to the uracil-DNA glycosylase (UDG) superfamily. UNG family.

The protein resides in the cytoplasm. It catalyses the reaction Hydrolyzes single-stranded DNA or mismatched double-stranded DNA and polynucleotides, releasing free uracil.. In terms of biological role, excises uracil residues from the DNA which can arise as a result of misincorporation of dUMP residues by DNA polymerase or due to deamination of cytosine. This chain is Uracil-DNA glycosylase 2, found in Listeria innocua serovar 6a (strain ATCC BAA-680 / CLIP 11262).